The primary structure comprises 81 residues: Sulfur carrier protein TusA (81 aa).

Cysteine 19 acts as the Cysteine persulfide intermediate in catalysis.

Belongs to the sulfur carrier protein TusA family.

The protein localises to the cytoplasm. Functionally, sulfur carrier protein which probably makes part of a sulfur-relay system. The chain is Sulfur carrier protein TusA from Shewanella oneidensis (strain ATCC 700550 / JCM 31522 / CIP 106686 / LMG 19005 / NCIMB 14063 / MR-1).